We begin with the raw amino-acid sequence, 237 residues long: Sugar fermentation stimulation protein homolog (237 aa).

This sequence belongs to the SfsA family.

This is Sugar fermentation stimulation protein homolog from Methylobacterium radiotolerans (strain ATCC 27329 / DSM 1819 / JCM 2831 / NBRC 15690 / NCIMB 10815 / 0-1).